Reading from the N-terminus, the 315-residue chain is Ribosomal protein L11 methyltransferase (315 aa).

4 residues coordinate S-adenosyl-L-methionine: T163, G185, D207, and N249.

It belongs to the methyltransferase superfamily. PrmA family.

Its subcellular location is the cytoplasm. The enzyme catalyses L-lysyl-[protein] + 3 S-adenosyl-L-methionine = N(6),N(6),N(6)-trimethyl-L-lysyl-[protein] + 3 S-adenosyl-L-homocysteine + 3 H(+). Methylates ribosomal protein L11. In Lactobacillus helveticus (strain DPC 4571), this protein is Ribosomal protein L11 methyltransferase.